Here is a 139-residue protein sequence, read N- to C-terminus: Small ribosomal subunit protein bS6 (139 aa).

A disordered region spans residues 120–139; sequence KGASKVETPTGPESTDIQEK. The span at 130–139 shows a compositional bias: polar residues; it reads GPESTDIQEK.

It belongs to the bacterial ribosomal protein bS6 family.

Its function is as follows. Binds together with bS18 to 16S ribosomal RNA. This chain is Small ribosomal subunit protein bS6 (rpsF), found in Borreliella burgdorferi (strain ATCC 35210 / DSM 4680 / CIP 102532 / B31) (Borrelia burgdorferi).